The following is a 908-amino-acid chain: 3-phosphoinositide-dependent protein kinase B (908 aa).

3 stretches are compositionally biased toward low complexity: residues 53–170 (NNNF…SSSL), 179–189 (YSDSSDSIDSY), and 200–216 (QQQQ…QPLH). The tract at residues 53–267 (NNNFNNNNNN…PNSSIPHKKS (215 aa)) is disordered. Residues 250–262 (KTSSFGLQPNSSI) show a composition bias toward polar residues. The Protein kinase domain maps to 271 to 527 (FDFIRTIGKG…ISEIKNHEFF (257 aa)). ATP contacts are provided by residues 281–283 (AYG) and Lys-300. The segment at 302–346 (LNKKLIIKEKKAKYVNTEKTILDSLDNPNIVKLFYTFQDENNLYF) is PIF-pocket. ATP-binding positions include 349–351 (EYC) and Asp-355. Asp-394 functions as the Proton acceptor in the catalytic mechanism. Residues Glu-398 and Asp-412 each contribute to the ATP site. Disordered stretches follow at residues 538 to 560 (SQTP…NSSL) and 606 to 755 (ISNN…KNLQ). Residues 607-684 (SNNNNNNNNT…PAYSSTPSST (78 aa)) show a composition bias toward low complexity. Polar residues predominate over residues 696–709 (SSCSSNNLLGKSSN). A compositionally biased stretch (low complexity) spans 710-741 (QQYQPFQFHQQQQQQQQQQQRERSSTTTPSPT). The 139-residue stretch at 764–902 (SSFSTSSPMS…KLWVDLINEL (139 aa)) folds into the PH domain.

This sequence belongs to the protein kinase superfamily. AGC Ser/Thr protein kinase family. PDPK1 subfamily.

The enzyme catalyses L-seryl-[protein] + ATP = O-phospho-L-seryl-[protein] + ADP + H(+). The catalysed reaction is L-threonyl-[protein] + ATP = O-phospho-L-threonyl-[protein] + ADP + H(+). In Dictyostelium discoideum (Social amoeba), this protein is 3-phosphoinositide-dependent protein kinase B (pdkB).